A 132-amino-acid polypeptide reads, in one-letter code: Nucleoid-associated protein EspR (132 aa).

A DNA-binding region (H-T-H motif) is located at residues 38 to 50; sequence ITMSAPYLSQLRS.

Homodimer. Binds DNA as a dimer of dimers.

The protein resides in the cytoplasm. It localises to the nucleoid. In terms of biological role, virulence regulator that has both architectural and regulatory roles. Impacts cell wall functions and pathogenesis through regulation of multiple genes. This Mycobacterium tuberculosis (strain CDC 1551 / Oshkosh) protein is Nucleoid-associated protein EspR.